The following is a 247-amino-acid chain: Chymase (247 aa).

Positions 1–17 are cleaved as a signal peptide; sequence MCLLSLPLLLFLQYTRA. A propeptide spans 18–21 (activation peptide); it reads KAGE. In terms of domain architecture, Peptidase S1 spans 22–245; the sequence is VIGGTECKPH…YRPWINKILK (224 aa). Cysteines 51 and 67 form a disulfide. His-66 (charge relay system) is an active-site residue. An N-linked (GlcNAc...) asparagine glycan is attached at Asn-103. Asp-110 (charge relay system) is an active-site residue. Asn-121 carries an N-linked (GlcNAc...) asparagine glycan. 2 cysteine pairs are disulfide-bonded: Cys-144-Cys-209 and Cys-175-Cys-188. Ser-203 serves as the catalytic Charge relay system.

The protein belongs to the peptidase S1 family. Granzyme subfamily.

The protein localises to the secreted. It localises to the cytoplasmic granule. The catalysed reaction is Preferential cleavage: Phe-|-Xaa &gt; Tyr-|-Xaa &gt; Trp-|-Xaa &gt; Leu-|-Xaa.. Its function is as follows. Major secreted protease of mast cells with suspected roles in vasoactive peptide generation, extracellular matrix degradation, and regulation of gland secretion. This is Chymase from Cavia porcellus (Guinea pig).